Reading from the N-terminus, the 465-residue chain is Serine carboxypeptidase-like 46 (465 aa).

The N-terminal stretch at 1–25 is a signal peptide; sequence MPRLQCLTMATSLILLLQALSLVSS. Cystine bridges form between C88–C344, C245–C263, and C288–C313. N-linked (GlcNAc...) asparagine glycosylation is found at N137 and N170. Residue S179 is part of the active site. N-linked (GlcNAc...) asparagine glycosylation occurs at N246. Catalysis depends on residues D381 and H438.

Belongs to the peptidase S10 family. As to expression, ubiquitous.

Its subcellular location is the secreted. Its function is as follows. Probable carboxypeptidase. The chain is Serine carboxypeptidase-like 46 (SCPL46) from Arabidopsis thaliana (Mouse-ear cress).